Reading from the N-terminus, the 180-residue chain is Large ribosomal subunit protein uL5 (180 aa).

It belongs to the universal ribosomal protein uL5 family. As to quaternary structure, part of the 50S ribosomal subunit; part of the 5S rRNA/L5/L18/L25 subcomplex. Contacts the 5S rRNA and the P site tRNA. Forms a bridge to the 30S subunit in the 70S ribosome.

This is one of the proteins that bind and probably mediate the attachment of the 5S RNA into the large ribosomal subunit, where it forms part of the central protuberance. In the 70S ribosome it contacts protein S13 of the 30S subunit (bridge B1b), connecting the 2 subunits; this bridge is implicated in subunit movement. Contacts the P site tRNA; the 5S rRNA and some of its associated proteins might help stabilize positioning of ribosome-bound tRNAs. The chain is Large ribosomal subunit protein uL5 from Clostridium tetani (strain Massachusetts / E88).